A 146-amino-acid chain; its full sequence is MESDFYLRYYVGHKGKFGHEFLEFEFRPDGKLRYANNSNYKNDVMIRKEAYVHKSVMEELKRIIDDSEITKEDDALWPPPDRVGRQELEIVIGDEHISFTTSKIGSLIDVNQSKDPEGLRVFYYLVQDLKCLVFSLIGLHFKIKPI.

N-acetylmethionine is present on Met1.

Belongs to the mago nashi family. Heterodimer with RBM8A. Core component of the mRNA splicing-dependent exon junction complex (EJC); the core complex contains CASC3, EIF4A3, MAGOH or MAGOHB, and RBM8A. Component of the ALYREF/THOC4-EJC-RNA complex; in the complex interacts with EIF4A3, RBM8A and THOC4 (via the RRM domain); these interactions are likely specific to RNA-bound EJC. Interacts with PYM1; the interaction is direct and dissociates the EJC from spliced mRNAs. Identified in a complex composed of the EJC core, UPF3B and UPF2. The EJC core can also interact with UPF3A (in vitro). Identified in the spliceosome C complex. Ubiquitous.

It localises to the nucleus. It is found in the nucleus speckle. The protein localises to the cytoplasm. Its function is as follows. Required for pre-mRNA splicing as component of the spliceosome. Plays a redundant role with MAGOHB as core component of the exon junction complex (EJC) and in the nonsense-mediated decay (NMD) pathway. The EJC is a dynamic structure consisting of core proteins and several peripheral nuclear and cytoplasmic associated factors that join the complex only transiently either during EJC assembly or during subsequent mRNA metabolism. The EJC marks the position of the exon-exon junction in the mature mRNA for the gene expression machinery and the core components remain bound to spliced mRNAs throughout all stages of mRNA metabolism thereby influencing downstream processes including nuclear mRNA export, subcellular mRNA localization, translation efficiency and nonsense-mediated mRNA decay (NMD). The MAGOH-RBM8A heterodimer inhibits the ATPase activity of EIF4A3, thereby trapping the ATP-bound EJC core onto spliced mRNA in a stable conformation. The MAGOH-RBM8A heterodimer interacts with the EJC key regulator PYM1 leading to EJC disassembly in the cytoplasm and translation enhancement of EJC-bearing spliced mRNAs by recruiting them to the ribosomal 48S pre-initiation complex. Involved in the splicing modulation of BCL2L1/Bcl-X (and probably other apoptotic genes); specifically inhibits formation of proapoptotic isoforms such as Bcl-X(S); the function is different from the established EJC assembly. This Homo sapiens (Human) protein is Protein mago nashi homolog (MAGOH).